A 160-amino-acid chain; its full sequence is MDKDDLTHFNDEKRAKMVDVTSKSETKRRAIARATIHMNEETLARIHAGKIAKGDVLAVAQVAGIMAAKKTSELIPMCHPIMTTKADISFDDDGKTALTITSEVVTVGKTGVEMEALTAVTIAALTIYDMCKAMDKGMQIEKTYLVEKTGGKSGTFKAEA.

Residues 77–79 (MCH) and 114–115 (ME) each bind substrate. Residue Asp-129 is part of the active site.

It belongs to the MoaC family. Homohexamer; trimer of dimers.

It catalyses the reaction (8S)-3',8-cyclo-7,8-dihydroguanosine 5'-triphosphate = cyclic pyranopterin phosphate + diphosphate. It functions in the pathway cofactor biosynthesis; molybdopterin biosynthesis. In terms of biological role, catalyzes the conversion of (8S)-3',8-cyclo-7,8-dihydroguanosine 5'-triphosphate to cyclic pyranopterin monophosphate (cPMP). This chain is Cyclic pyranopterin monophosphate synthase, found in Listeria innocua serovar 6a (strain ATCC BAA-680 / CLIP 11262).